A 414-amino-acid polypeptide reads, in one-letter code: Glutamyl-tRNA reductase (414 aa).

Residues 49-52 (TCNR), Ser108, 113-115 (EPQ), and Gln119 contribute to the substrate site. Cys50 serves as the catalytic Nucleophile. Residue 188–193 (GAGQTG) participates in NADP(+) binding.

The protein belongs to the glutamyl-tRNA reductase family. Homodimer.

It catalyses the reaction (S)-4-amino-5-oxopentanoate + tRNA(Glu) + NADP(+) = L-glutamyl-tRNA(Glu) + NADPH + H(+). It participates in porphyrin-containing compound metabolism; protoporphyrin-IX biosynthesis; 5-aminolevulinate from L-glutamyl-tRNA(Glu): step 1/2. Catalyzes the NADPH-dependent reduction of glutamyl-tRNA(Glu) to glutamate 1-semialdehyde (GSA). This Francisella tularensis subsp. holarctica (strain FTNF002-00 / FTA) protein is Glutamyl-tRNA reductase.